The following is a 209-amino-acid chain: 3-dehydroquinate dehydratase (209 aa).

3-dehydroquinate is bound by residues serine 6, 25 to 27, and arginine 55; that span reads ELR. Residue histidine 109 is the Proton donor/acceptor of the active site. Catalysis depends on lysine 134, which acts as the Schiff-base intermediate with substrate. Residues arginine 172 and glutamine 195 each contribute to the 3-dehydroquinate site.

The protein belongs to the type-I 3-dehydroquinase family. As to quaternary structure, homodimer.

It carries out the reaction 3-dehydroquinate = 3-dehydroshikimate + H2O. The protein operates within metabolic intermediate biosynthesis; chorismate biosynthesis; chorismate from D-erythrose 4-phosphate and phosphoenolpyruvate: step 3/7. Its function is as follows. Involved in the third step of the chorismate pathway, which leads to the biosynthesis of aromatic amino acids. Catalyzes the cis-dehydration of 3-dehydroquinate (DHQ) and introduces the first double bond of the aromatic ring to yield 3-dehydroshikimate. The protein is 3-dehydroquinate dehydratase of Methanoregula boonei (strain DSM 21154 / JCM 14090 / 6A8).